A 154-amino-acid chain; its full sequence is Iron-sulfur cluster assembly 2 homolog, mitochondrial (154 aa).

The N-terminal 8 residues, 1 to 8 (MAAARGLS), are a transit peptide targeting the mitochondrion. Residues cysteine 79, cysteine 144, and cysteine 146 each contribute to the Fe cation site.

The protein belongs to the HesB/IscA family. In terms of assembly, heterotetramer; forms a dimer of dimers with IBA57. Interacts with [2Fe-2S]-ISCA2 forming the heterodimer [2Fe- 2S]-ISCA2-IBA57 complex; [2Fe-2S] cluster binding is absolutely required to promote the complex formation.

The protein resides in the mitochondrion. Its function is as follows. Involved in the maturation of mitochondrial 4Fe-4S proteins functioning late in the iron-sulfur cluster assembly pathway. May be involved in the binding of an intermediate of Fe/S cluster assembly. The chain is Iron-sulfur cluster assembly 2 homolog, mitochondrial (ISCA2) from Pongo abelii (Sumatran orangutan).